The primary structure comprises 462 residues: Argininosuccinate lyase (462 aa).

It belongs to the lyase 1 family. Argininosuccinate lyase subfamily.

It localises to the cytoplasm. The enzyme catalyses 2-(N(omega)-L-arginino)succinate = fumarate + L-arginine. The protein operates within amino-acid biosynthesis; L-arginine biosynthesis; L-arginine from L-ornithine and carbamoyl phosphate: step 3/3. The chain is Argininosuccinate lyase from Thermus thermophilus (strain ATCC BAA-163 / DSM 7039 / HB27).